The primary structure comprises 331 residues: Light-harvesting complex I LH35 proteins (331 aa).

Its subcellular location is the plastid. It is found in the chloroplast. In Euglena gracilis, this protein is Light-harvesting complex I LH35 proteins.